Here is a 590-residue protein sequence, read N- to C-terminus: Probable metalloendopeptidase G1-type (590 aa).

Histidine 41 lines the Zn(2+) pocket. The active site involves glutamate 44. Histidine 45 provides a ligand contact to Zn(2+).

It belongs to the peptidase M44 family. Zn(2+) is required as a cofactor.

In terms of biological role, seems to be involved in viral proteins maturation by cleavage at Ala-Gly-|-Xaa motifs. In Homo sapiens (Human), this protein is Probable metalloendopeptidase G1-type.